Consider the following 567-residue polypeptide: Restriction of telomere capping protein 5 (567 aa).

Residues 289-515 (KVMTPALLAQ…IQDVEVWGCG (227 aa)) form the TLDc domain.

It belongs to the RTC5 family.

It localises to the cytoplasm. Its function is as follows. May be involved in a process influencing telomere capping. The polypeptide is Restriction of telomere capping protein 5 (RTC5) (Saccharomyces cerevisiae (strain RM11-1a) (Baker's yeast)).